The primary structure comprises 329 residues: Cytosolic arginine sensor for mTORC1 subunit 2 (329 aa).

2 consecutive ACT domains span residues 72–139 and 262–322; these read ADAT…MHTL and ELWK…NALQ.

It belongs to the GATS family. In terms of assembly, may form homodimers and heterodimers.

It is found in the cytoplasm. The protein localises to the cytosol. Its function is as follows. Functions as a negative regulator of the TORC1 signaling pathway. The polypeptide is Cytosolic arginine sensor for mTORC1 subunit 2 (Xenopus tropicalis (Western clawed frog)).